The primary structure comprises 293 residues: Pyridoxal 5'-phosphate synthase subunit PdxS (293 aa).

Residue Asp-23 coordinates D-ribose 5-phosphate. Catalysis depends on Lys-80, which acts as the Schiff-base intermediate with D-ribose 5-phosphate. Gly-152 provides a ligand contact to D-ribose 5-phosphate. Arg-164 contacts D-glyceraldehyde 3-phosphate. D-ribose 5-phosphate contacts are provided by residues Gly-213 and 234–235 (GS).

It belongs to the PdxS/SNZ family. As to quaternary structure, in the presence of PdxT, forms a dodecamer of heterodimers.

The catalysed reaction is aldehydo-D-ribose 5-phosphate + D-glyceraldehyde 3-phosphate + L-glutamine = pyridoxal 5'-phosphate + L-glutamate + phosphate + 3 H2O + H(+). It functions in the pathway cofactor biosynthesis; pyridoxal 5'-phosphate biosynthesis. Its function is as follows. Catalyzes the formation of pyridoxal 5'-phosphate from ribose 5-phosphate (RBP), glyceraldehyde 3-phosphate (G3P) and ammonia. The ammonia is provided by the PdxT subunit. Can also use ribulose 5-phosphate and dihydroxyacetone phosphate as substrates, resulting from enzyme-catalyzed isomerization of RBP and G3P, respectively. In Chloroflexus aurantiacus (strain ATCC 29366 / DSM 635 / J-10-fl), this protein is Pyridoxal 5'-phosphate synthase subunit PdxS.